We begin with the raw amino-acid sequence, 187 residues long: Elongation factor P (187 aa).

It belongs to the elongation factor P family.

The protein resides in the cytoplasm. The protein operates within protein biosynthesis; polypeptide chain elongation. In terms of biological role, involved in peptide bond synthesis. Stimulates efficient translation and peptide-bond synthesis on native or reconstituted 70S ribosomes in vitro. Probably functions indirectly by altering the affinity of the ribosome for aminoacyl-tRNA, thus increasing their reactivity as acceptors for peptidyl transferase. In Desulfosudis oleivorans (strain DSM 6200 / JCM 39069 / Hxd3) (Desulfococcus oleovorans), this protein is Elongation factor P.